The sequence spans 333 residues: L-lactate dehydrogenase B chain (333 aa).

NAD(+) contacts are provided by residues 29-57 (GQVGMACAISILGKGLCDELALVDVLEDK) and Arg-99. Positions 106, 138, and 169 each coordinate substrate. Asn-138 contributes to the NAD(+) binding site. The active-site Proton acceptor is His-193. Thr-248 is a binding site for substrate.

It belongs to the LDH/MDH superfamily. LDH family. In terms of assembly, homotetramer.

The protein resides in the cytoplasm. The enzyme catalyses (S)-lactate + NAD(+) = pyruvate + NADH + H(+). It participates in fermentation; pyruvate fermentation to lactate; (S)-lactate from pyruvate: step 1/1. Functionally, interconverts simultaneously and stereospecifically pyruvate and lactate with concomitant interconversion of NADH and NAD(+). This Gallus gallus (Chicken) protein is L-lactate dehydrogenase B chain (LDHB).